A 66-amino-acid polypeptide reads, in one-letter code: uncharacterized protein (66 aa).

Residues 32–49 (WAFSLLIAGSAFLWIYMR) form a helical membrane-spanning segment.

It is found in the membrane. This is an uncharacterized protein from Bacillus subtilis (strain 168).